The sequence spans 514 residues: MLLGRPLSLADLEEIARRGRPVAICAEARERAAASRRAIDAIAAAGDAAPAVYGINTGFGALAETRIADHDIRALQRNLVRSHACGVGPELGEAEVRAMIVLRAQVIALGHSGVRTEVLDLLAALLERRVSPRIPAQGSVGASGDLAPLAHLALTLIGEGEARFEGQLLPSAVALAKAGLAPIELAAKEGLALINGTQYMTALGALALRDAAALCTVADIAGAVSLEALMGSKRPFDERLMRVRPHPGQAGTAGNLRALLGGSEIMQSHADCPRVQDAYSLRCMPQVHGATRDAVAWAAEVLTREVNSVTDNPTVFLGDGADGGAELISGGNFHGQPVALALDLAAMAAAELANISERRVEQLVNPALSTGLTPFLAPHSGLHSGFMIAQVASASLVSENKVLCHPASVDSIPSSAGREDHVSMGSISARKLAQVIENVRSSLAIELITAAQGVDQRLPLRPSAGVAAAHAAIRRVVPGLTEDRPLYRDIAAAAELIQSGALIAAVEEAVGPLN.

Residues 142 to 144 constitute a cross-link (5-imidazolinone (Ala-Gly)); sequence ASG. A 2,3-didehydroalanine (Ser) modification is found at S143.

It belongs to the PAL/histidase family. Post-translationally, contains an active site 4-methylidene-imidazol-5-one (MIO), which is formed autocatalytically by cyclization and dehydration of residues Ala-Ser-Gly.

It is found in the cytoplasm. The enzyme catalyses L-histidine = trans-urocanate + NH4(+). It participates in amino-acid degradation; L-histidine degradation into L-glutamate; N-formimidoyl-L-glutamate from L-histidine: step 1/3. The sequence is that of Histidine ammonia-lyase from Sorangium cellulosum (strain So ce56) (Polyangium cellulosum (strain So ce56)).